Reading from the N-terminus, the 448-residue chain is Na(+)-translocating NADH-quinone reductase subunit A (448 aa).

This sequence belongs to the NqrA family. In terms of assembly, composed of six subunits; NqrA, NqrB, NqrC, NqrD, NqrE and NqrF.

It catalyses the reaction a ubiquinone + n Na(+)(in) + NADH + H(+) = a ubiquinol + n Na(+)(out) + NAD(+). Functionally, NQR complex catalyzes the reduction of ubiquinone-1 to ubiquinol by two successive reactions, coupled with the transport of Na(+) ions from the cytoplasm to the periplasm. NqrA to NqrE are probably involved in the second step, the conversion of ubisemiquinone to ubiquinol. The polypeptide is Na(+)-translocating NADH-quinone reductase subunit A (Alcanivorax borkumensis (strain ATCC 700651 / DSM 11573 / NCIMB 13689 / SK2)).